Reading from the N-terminus, the 116-residue chain is Endoribonuclease EndoA (116 aa).

This sequence belongs to the PemK/MazF family. Homodimer. Forms a complex with antitoxin EndoAI in which the toxin activity is inhibited. One dimer binds a ssRNA substrate, forms a heterohexamer composed of alternating toxin and antitoxin homodimers which inhibits the endoribonuclease activity. Antitoxin prevents RNA binding to the endoribonuclease.

Functionally, toxic component of a type II toxin-antitoxin (TA) system. Specific for 5'-UACAU-3' sequences, cleaving after the first U. Yields cleavage products with 3' phosphate and 5' hydroxyl groups. Cannot digest substrate with a UUdUACAUAA cleavage site. Overexpression is toxic for cell growth (shown in E.coli), probably by inhibiting protein synthesis through the cleavage of single-stranded RNA. The toxicity is reversed by the antitoxin EndoAI. Toxin activity cannot be inhibited by MazE from E.coli. The EndoA-EndoAI complex does not seem to bind its own promoter. In Bacillus subtilis (strain 168), this protein is Endoribonuclease EndoA.